The following is a 216-amino-acid chain: 3-isopropylmalate dehydratase small subunit (216 aa).

Belongs to the LeuD family. LeuD type 1 subfamily. Heterodimer of LeuC and LeuD.

It carries out the reaction (2R,3S)-3-isopropylmalate = (2S)-2-isopropylmalate. Its pathway is amino-acid biosynthesis; L-leucine biosynthesis; L-leucine from 3-methyl-2-oxobutanoate: step 2/4. Catalyzes the isomerization between 2-isopropylmalate and 3-isopropylmalate, via the formation of 2-isopropylmaleate. This chain is 3-isopropylmalate dehydratase small subunit, found in Methylibium petroleiphilum (strain ATCC BAA-1232 / LMG 22953 / PM1).